We begin with the raw amino-acid sequence, 444 residues long: Orexin receptor type 2 (444 aa).

Residues 1-10 (MSGTKLEDSP) show a composition bias toward basic and acidic residues. Residues 1–20 (MSGTKLEDSPPCRNWSSASE) form a disordered region. Over 1–54 (MSGTKLEDSPPCRNWSSASELNETQEPFLNPTDYDDEEFLRYLWREYLHPKEYE) the chain is Extracellular. 2 N-linked (GlcNAc...) asparagine glycosylation sites follow: Asn-14 and Asn-22. The required for response to orexin-A stretch occupies residues 33-49 (DYDDEEFLRYLWREYLH). Residues 55–75 (WVLIAGYIIVFVVALIGNVLV) form a helical membrane-spanning segment. The Cytoplasmic segment spans residues 76–88 (CVAVWKNHHMRTV). A helical membrane pass occupies residues 89-110 (TNYFIVNLSLADVLVTITCLPA). The Extracellular portion of the chain corresponds to 111–127 (TLVVDITETWFFGQSLC). Cys-127 and Cys-210 form a disulfide bridge. The helical transmembrane segment at 128–150 (KVIPYLQTVSVSVSVLTLSCIAL) threads the bilayer. Topologically, residues 151 to 170 (DRWYAICHPLMFKSTAKRAR) are cytoplasmic. The helical transmembrane segment at 171–191 (NSIVIIWIVSCIIMIPQAIVM) threads the bilayer. At 192 to 222 (ECSTVFPGLANKTTLFTVCDERWGGEIYPKM) the chain is on the extracellular side. A glycan (N-linked (GlcNAc...) asparagine) is linked at Asn-202. A helical transmembrane segment spans residues 223 to 243 (YHICFFLVTYMAPLCLMVLAY). Residues 244-304 (LQIFRKLWCR…QIRARRKTAR (61 aa)) are Cytoplasmic-facing. The helical transmembrane segment at 305–326 (MLMIVLLVFAICYLPISILNVL) threads the bilayer. Asn-324 is a suvorexant binding site. The Extracellular segment spans residues 327 to 342 (KRVFGMFAHTEDRETV). The helical transmembrane segment at 343 to 366 (YAWFTFSHWLVYANSAANPIIYNF) threads the bilayer. Topologically, residues 367-444 (LSGKFREEFK…ANGAGPLQNW (78 aa)) are cytoplasmic.

It belongs to the G-protein coupled receptor 1 family.

Its subcellular location is the cell membrane. In terms of biological role, nonselective, high-affinity receptor for both orexin-A and orexin-B neuropeptides. Triggers an increase in cytoplasmic Ca(2+) levels in response to orexin-A binding. This chain is Orexin receptor type 2 (HCRTR2), found in Homo sapiens (Human).